We begin with the raw amino-acid sequence, 501 residues long: 2,3-bisphosphoglycerate-independent phosphoglycerate mutase (501 aa).

The Mn(2+) site is built by aspartate 10 and serine 60. Serine 60 serves as the catalytic Phosphoserine intermediate. Substrate-binding positions include histidine 121, 151–152 (RD), arginine 182, arginine 188, 256–259 (RPDR), and lysine 329. Mn(2+) contacts are provided by aspartate 394, histidine 398, aspartate 435, histidine 436, and histidine 453.

It belongs to the BPG-independent phosphoglycerate mutase family. In terms of assembly, monomer. The cofactor is Mn(2+).

The enzyme catalyses (2R)-2-phosphoglycerate = (2R)-3-phosphoglycerate. The protein operates within carbohydrate degradation; glycolysis; pyruvate from D-glyceraldehyde 3-phosphate: step 3/5. In terms of biological role, catalyzes the interconversion of 2-phosphoglycerate and 3-phosphoglycerate. In Mycoplasmopsis synoviae (strain 53) (Mycoplasma synoviae), this protein is 2,3-bisphosphoglycerate-independent phosphoglycerate mutase.